Consider the following 347-residue polypeptide: Protein RecA (347 aa).

Residue 65–72 (GPESSGKT) coordinates ATP. Residues 327–336 (KFEPTELSRE) are compositionally biased toward basic and acidic residues. The interval 327–347 (KFEPTELSREEGDEDTLEDAM) is disordered. A compositionally biased stretch (acidic residues) spans 337 to 347 (EGDEDTLEDAM).

This sequence belongs to the RecA family.

Its subcellular location is the cytoplasm. Can catalyze the hydrolysis of ATP in the presence of single-stranded DNA, the ATP-dependent uptake of single-stranded DNA by duplex DNA, and the ATP-dependent hybridization of homologous single-stranded DNAs. It interacts with LexA causing its activation and leading to its autocatalytic cleavage. The chain is Protein RecA from Xylella fastidiosa (strain M12).